A 130-amino-acid chain; its full sequence is Ribosome-binding factor A (130 aa).

The interval 111–130 is disordered; that stretch reads RDLDDVGPGATSSDEDAEQR.

Belongs to the RbfA family. Monomer. Binds 30S ribosomal subunits, but not 50S ribosomal subunits or 70S ribosomes.

The protein localises to the cytoplasm. Functionally, one of several proteins that assist in the late maturation steps of the functional core of the 30S ribosomal subunit. Associates with free 30S ribosomal subunits (but not with 30S subunits that are part of 70S ribosomes or polysomes). Required for efficient processing of 16S rRNA. May interact with the 5'-terminal helix region of 16S rRNA. This is Ribosome-binding factor A from Xanthomonas oryzae pv. oryzae (strain MAFF 311018).